A 484-amino-acid chain; its full sequence is ATP synthase subunit beta, chloroplastic (484 aa).

163-170 (GGAGVGKT) provides a ligand contact to ATP.

This sequence belongs to the ATPase alpha/beta chains family. F-type ATPases have 2 components, CF(1) - the catalytic core - and CF(0) - the membrane proton channel. CF(1) has five subunits: alpha(3), beta(3), gamma(1), delta(1), epsilon(1). CF(0) has four main subunits: a(1), b(1), b'(1) and c(9-12).

It localises to the plastid. The protein localises to the chloroplast thylakoid membrane. It catalyses the reaction ATP + H2O + 4 H(+)(in) = ADP + phosphate + 5 H(+)(out). In terms of biological role, produces ATP from ADP in the presence of a proton gradient across the membrane. The catalytic sites are hosted primarily by the beta subunits. The protein is ATP synthase subunit beta, chloroplastic of Stigeoclonium helveticum (Green alga).